The sequence spans 85 residues: Large ribosomal subunit protein eL43 (85 aa).

Residues Cys32, Cys35, Cys50, and Cys53 each coordinate Zn(2+). The C4-type zinc finger occupies 32–53 (CTFCGKTKMKRRAVGIWHCGSC).

Belongs to the eukaryotic ribosomal protein eL43 family. In terms of assembly, component of the large ribosomal subunit.

It is found in the cytoplasm. In terms of biological role, component of the large ribosomal subunit. The ribosome is a large ribonucleoprotein complex responsible for the synthesis of proteins in the cell. This chain is Large ribosomal subunit protein eL43 (rpl37a), found in Myxine glutinosa (Atlantic hagfish).